Reading from the N-terminus, the 449-residue chain is MAPHRSRQRNPRFKLWRYDDEPLAIAETMPELRHLKLFGNGLTNLRLEAILDNCVHLVHLDLRRCFNINLLGDLEKRCSERIRDLRRPDDSTADSPFDASSDIYSAGEDDYDFYSDDSDGTLSDHFEECKTVSVATGNESVYVLSFVRSDNFIYPKKIASSSSLSSTPLPSLMKDKKLRNWAELPSKLTSSILLRLGAIEILQNAQKVCKPWHRVCKDPSMWRKIDIDNRNDRAAFKYDLESMCRHAVDRSHGGLIEIEIWYYGTNDLIMYIADRSSNLKSLGLVRCFPITDEGVAKAVSKVPLLEYLEVSYCLFSGESLRDIGRSCPNLKTLKLNRAPEIMFSNSGFDDNAKAIAESMPELRHLQLLGNGLTNKGLNAILDGCPHLEHLDLRQCFNINLVGDLKKRCFERIKDLRCPNDSDDDSDDGSDNGAVTTFGSQFNETDYHWY.

2 LRR repeats span residues 14–37 and 39–64; these read KLWR…HLKL and GNGL…DLRR. The region spanning 178–225 is the F-box domain; the sequence is LRNWAELPSKLTSSILLRLGAIEILQNAQKVCKPWHRVCKDPSMWRKI. 6 LRR repeats span residues 261–286, 287–311, 312–337, 344–367, 369–394, and 401–427; these read WYYG…GLVR, CFPI…LEVS, YCLF…KLNR, SNSG…HLQL, GNGL…DLRQ, and VGDL…DSDD.

The protein is Putative F-box/LRR-repeat protein 23 (FBL23) of Arabidopsis thaliana (Mouse-ear cress).